An 846-amino-acid polypeptide reads, in one-letter code: uncharacterized protein (846 aa).

Disordered regions lie at residues Val-159–Ile-217, Cys-254–Asn-276, Asn-332–Ile-414, Gly-459–Leu-501, Gln-556–Asp-651, and Thr-803–Lys-846. The segment covering His-163 to Ile-217 has biased composition (low complexity). Positions Leu-355–Ile-414 are enriched in low complexity. Over residues Gly-459 to Ala-482 the composition is skewed to polar residues. 3 stretches are compositionally biased toward low complexity: residues Ser-483–Leu-501, Gln-568–Asn-642, and Asn-811–Lys-846.

This is an uncharacterized protein from Dictyostelium discoideum (Social amoeba).